Here is a 190-residue protein sequence, read N- to C-terminus: Elongation factor P (190 aa).

Belongs to the elongation factor P family.

It localises to the cytoplasm. It functions in the pathway protein biosynthesis; polypeptide chain elongation. Functionally, involved in peptide bond synthesis. Stimulates efficient translation and peptide-bond synthesis on native or reconstituted 70S ribosomes in vitro. Probably functions indirectly by altering the affinity of the ribosome for aminoacyl-tRNA, thus increasing their reactivity as acceptors for peptidyl transferase. This is Elongation factor P from Persephonella marina (strain DSM 14350 / EX-H1).